A 210-amino-acid polypeptide reads, in one-letter code: Tetraspanin-31 (210 aa).

At methionine 1–alanine 12 the chain is on the cytoplasmic side. A helical membrane pass occupies residues leucine 13–tryptophan 33. Over glycine 34–histidine 44 the chain is Extracellular. Residues isoleucine 45–valine 65 traverse the membrane as a helical segment. Residues glycine 66–glutamine 72 are Cytoplasmic-facing. Residues valine 73–serine 93 form a helical membrane-spanning segment. Residues cysteine 94–lysine 173 lie on the Extracellular side of the membrane. 4 N-linked (GlcNAc...) asparagine glycosylation sites follow: asparagine 100, asparagine 109, asparagine 117, and asparagine 134. Residues isoleucine 174 to methionine 194 form a helical membrane-spanning segment. The Cytoplasmic portion of the chain corresponds to arginine 195–leucine 210.

This sequence belongs to the tetraspanin (TM4SF) family.

The protein resides in the membrane. The sequence is that of Tetraspanin-31 (TSPAN31) from Homo sapiens (Human).